The primary structure comprises 342 residues: S-adenosylmethionine:tRNA ribosyltransferase-isomerase (342 aa).

Belongs to the QueA family. As to quaternary structure, monomer.

The protein localises to the cytoplasm. It catalyses the reaction 7-aminomethyl-7-carbaguanosine(34) in tRNA + S-adenosyl-L-methionine = epoxyqueuosine(34) in tRNA + adenine + L-methionine + 2 H(+). Its pathway is tRNA modification; tRNA-queuosine biosynthesis. Transfers and isomerizes the ribose moiety from AdoMet to the 7-aminomethyl group of 7-deazaguanine (preQ1-tRNA) to give epoxyqueuosine (oQ-tRNA). The chain is S-adenosylmethionine:tRNA ribosyltransferase-isomerase from Listeria monocytogenes serotype 4a (strain HCC23).